Reading from the N-terminus, the 554-residue chain is ATP synthase subunit alpha (554 aa).

Residue 173-180 participates in ATP binding; that stretch reads GDRQTGKT. The segment at 531-554 is disordered; that stretch reads SHLAAEKVRKHVPPSKPTTQRTAG.

This sequence belongs to the ATPase alpha/beta chains family. As to quaternary structure, F-type ATPases have 2 components, CF(1) - the catalytic core - and CF(0) - the membrane proton channel. CF(1) has five subunits: alpha(3), beta(3), gamma(1), delta(1), epsilon(1). CF(0) has three main subunits: a(1), b(2) and c(9-12). The alpha and beta chains form an alternating ring which encloses part of the gamma chain. CF(1) is attached to CF(0) by a central stalk formed by the gamma and epsilon chains, while a peripheral stalk is formed by the delta and b chains.

The protein localises to the cell membrane. The catalysed reaction is ATP + H2O + 4 H(+)(in) = ADP + phosphate + 5 H(+)(out). In terms of biological role, produces ATP from ADP in the presence of a proton gradient across the membrane. The alpha chain is a regulatory subunit. This is ATP synthase subunit alpha from Acidothermus cellulolyticus (strain ATCC 43068 / DSM 8971 / 11B).